A 316-amino-acid chain; its full sequence is Bifunctional peptidase and (3S)-lysyl hydroxylase JMJD7 (316 aa).

The JmjC domain occupies 128–307 (VQKQCSNLPS…LKYSYFQLLD (180 aa)). The Fe cation site is built by His-178, Asp-180, and His-277.

As to quaternary structure, homodimer; disulfide-linked. Interacts with DRG1 and DRG2. Requires Fe(2+) as cofactor.

The protein resides in the nucleus. It localises to the cytoplasm. The catalysed reaction is L-lysyl-[protein] + 2-oxoglutarate + O2 = (3S)-3-hydroxy-L-lysyl-[protein] + succinate + CO2. Bifunctional enzyme that acts both as an endopeptidase and 2-oxoglutarate-dependent monooxygenase. Endopeptidase that cleaves histones N-terminal tails at the carboxyl side of methylated arginine or lysine residues, to generate 'tailless nucleosomes', which may trigger transcription elongation. Preferentially recognizes and cleaves monomethylated and dimethylated arginine residues of histones H2, H3 and H4. After initial cleavage, continues to digest histones tails via its aminopeptidase activity. Additionally, may play a role in protein biosynthesis by modifying the translation machinery. Acts as a Fe(2+) and 2-oxoglutarate-dependent monooxygenase, catalyzing (S)-stereospecific hydroxylation at C-3 of 'Lys-22' of DRG1 and 'Lys-21' of DRG2 translation factors (TRAFAC), promoting their interaction with ribonucleic acids (RNA). In Homo sapiens (Human), this protein is Bifunctional peptidase and (3S)-lysyl hydroxylase JMJD7.